Reading from the N-terminus, the 355-residue chain is UDP-N-acetylglucosamine--N-acetylmuramyl-(pentapeptide) pyrophosphoryl-undecaprenol N-acetylglucosamine transferase (355 aa).

UDP-N-acetyl-alpha-D-glucosamine-binding positions include 14-16 (TGG), Asn126, Arg162, Ser190, Ile244, and Gln289.

This sequence belongs to the glycosyltransferase 28 family. MurG subfamily.

It localises to the cell inner membrane. It carries out the reaction di-trans,octa-cis-undecaprenyl diphospho-N-acetyl-alpha-D-muramoyl-L-alanyl-D-glutamyl-meso-2,6-diaminopimeloyl-D-alanyl-D-alanine + UDP-N-acetyl-alpha-D-glucosamine = di-trans,octa-cis-undecaprenyl diphospho-[N-acetyl-alpha-D-glucosaminyl-(1-&gt;4)]-N-acetyl-alpha-D-muramoyl-L-alanyl-D-glutamyl-meso-2,6-diaminopimeloyl-D-alanyl-D-alanine + UDP + H(+). It functions in the pathway cell wall biogenesis; peptidoglycan biosynthesis. In terms of biological role, cell wall formation. Catalyzes the transfer of a GlcNAc subunit on undecaprenyl-pyrophosphoryl-MurNAc-pentapeptide (lipid intermediate I) to form undecaprenyl-pyrophosphoryl-MurNAc-(pentapeptide)GlcNAc (lipid intermediate II). This Paracidovorax citrulli (strain AAC00-1) (Acidovorax citrulli) protein is UDP-N-acetylglucosamine--N-acetylmuramyl-(pentapeptide) pyrophosphoryl-undecaprenol N-acetylglucosamine transferase.